We begin with the raw amino-acid sequence, 1010 residues long: Polyhomeotic-like protein 1 (1010 aa).

Low complexity predominate over residues 1–22 (METESEQNSSSTNGSSSSGASS). 6 disordered regions span residues 1 to 25 (METE…SRPQ), 212 to 243 (NQQA…LSQT), 259 to 312 (GQSL…TGVV), 444 to 506 (QQQG…SKPP), 565 to 588 (GAVQ…PGAL), and 646 to 678 (KRKA…SPKV). Residues 212–228 (NQQASAQGPQMPGSTQK) show a composition bias toward polar residues. Positions 279-292 (MGPGGGGQAPGGLG) are enriched in gly residues. A compositionally biased stretch (pro residues) spans 453–463 (PQPPQVPPTQQ). Over residues 464–480 (VPPSQSQQQAQTLVVQP) the composition is skewed to low complexity. Over residues 488–500 (TLPPEPTSKPPIP) the composition is skewed to pro residues. Residues 575 to 587 (ASSPPSSQAAPGA) are compositionally biased toward low complexity. A Phosphoserine modification is found at Ser-651. Lys-769 is covalently cross-linked (Glycyl lysine isopeptide (Lys-Gly) (interchain with G-Cter in SUMO2)). The segment at 772 to 794 (QAGLPTGLNESQPSGPLGGDSPS) is disordered. The FCS-type zinc-finger motif lies at 797 to 831 (LEKKANLLKCEYCGKYAPAEQFRGSKRFCSMTCAK). 4 residues coordinate Zn(2+): Cys-806, Cys-809, Cys-825, and Cys-829. The disordered stretch occupies residues 854 to 928 (ASYARVRRRG…LGNTITTPST (75 aa)). Ser-904 carries the phosphoserine modification. Thr-928 carries the phosphothreonine modification. Residues 946-1010 (WSVEEVYEFI…CAKINVLKET (65 aa)) enclose the SAM domain.

As to quaternary structure, homodimer. Component of a PRC1-like complex. Interacts with the SAM domain of SCMH1 via its SAM domain in vitro. Interacts with RNF2 and CBX7. Interacts with PHC2. Interacts with BMI1. As to expression, highly expressed in testis with lower levels in most other tissues. Expressed in embryonic stem cells.

The protein resides in the nucleus. Functionally, component of a Polycomb group (PcG) multiprotein PRC1-like complex, a complex class required to maintain the transcriptionally repressive state of many genes, including Hox genes, throughout development. PcG PRC1 complex acts via chromatin remodeling and modification of histones; it mediates monoubiquitination of histone H2A 'Lys-119', rendering chromatin heritably changed in its expressibility. Required for proper control of cellular levels of GMNN expression. This Mus musculus (Mouse) protein is Polyhomeotic-like protein 1.